Consider the following 176-residue polypeptide: Ribosome maturation factor RimM (176 aa).

Residues 100–173 enclose the PRC barrel domain; that stretch reads EGEFHLLDLV…WLRLTPPPGL (74 aa).

This sequence belongs to the RimM family. As to quaternary structure, binds ribosomal protein uS19.

The protein resides in the cytoplasm. Its function is as follows. An accessory protein needed during the final step in the assembly of 30S ribosomal subunit, possibly for assembly of the head region. Essential for efficient processing of 16S rRNA. May be needed both before and after RbfA during the maturation of 16S rRNA. It has affinity for free ribosomal 30S subunits but not for 70S ribosomes. The chain is Ribosome maturation factor RimM from Prochlorococcus marinus (strain MIT 9313).